A 120-amino-acid chain; its full sequence is Large ribosomal subunit protein uL18 (120 aa).

This sequence belongs to the universal ribosomal protein uL18 family. As to quaternary structure, part of the 50S ribosomal subunit; part of the 5S rRNA/L5/L18/L25 subcomplex. Contacts the 5S and 23S rRNAs.

This is one of the proteins that bind and probably mediate the attachment of the 5S RNA into the large ribosomal subunit, where it forms part of the central protuberance. This Bordetella bronchiseptica (strain ATCC BAA-588 / NCTC 13252 / RB50) (Alcaligenes bronchisepticus) protein is Large ribosomal subunit protein uL18.